Here is a 269-residue protein sequence, read N- to C-terminus: Hydroxyethylthiazole kinase (269 aa).

M45 serves as a coordination point for substrate. ATP contacts are provided by R121 and T167. G194 serves as a coordination point for substrate.

Belongs to the Thz kinase family. Requires Mg(2+) as cofactor.

It carries out the reaction 5-(2-hydroxyethyl)-4-methylthiazole + ATP = 4-methyl-5-(2-phosphooxyethyl)-thiazole + ADP + H(+). It functions in the pathway cofactor biosynthesis; thiamine diphosphate biosynthesis; 4-methyl-5-(2-phosphoethyl)-thiazole from 5-(2-hydroxyethyl)-4-methylthiazole: step 1/1. Catalyzes the phosphorylation of the hydroxyl group of 4-methyl-5-beta-hydroxyethylthiazole (THZ). The protein is Hydroxyethylthiazole kinase of Brevibacillus brevis (strain 47 / JCM 6285 / NBRC 100599).